The primary structure comprises 312 residues: Ubiquinone biosynthesis O-methyltransferase, mitochondrial (312 aa).

Residues 1–32 constitute a mitochondrion transit peptide; that stretch reads MLLRSRFLKVIHVRKQLSACSRFAIQTQTRCK. Arg68, Gly130, Asp153, and Met196 together coordinate S-adenosyl-L-methionine. Mg(2+)-binding residues include Glu197, Glu200, and His201.

Belongs to the class I-like SAM-binding methyltransferase superfamily. UbiG/COQ3 family. In terms of assembly, component of a multi-subunit COQ enzyme complex, composed of at least COQ3, COQ4, COQ5, COQ6, COQ7 and COQ9. Interacts directly with COQ4. The cofactor is Mg(2+).

Its subcellular location is the mitochondrion inner membrane. It catalyses the reaction 3,4-dihydroxy-5-(all-trans-hexaprenyl)benzoate + S-adenosyl-L-methionine = 4-hydroxy-3-methoxy-5-(all-trans-hexaprenyl)benzoate + S-adenosyl-L-homocysteine + H(+). It carries out the reaction a 3-demethylubiquinone + S-adenosyl-L-methionine = a ubiquinone + S-adenosyl-L-homocysteine. The catalysed reaction is 3-demethylubiquinol-6 + S-adenosyl-L-methionine = ubiquinol-6 + S-adenosyl-L-homocysteine + H(+). It participates in cofactor biosynthesis; ubiquinone biosynthesis. With respect to regulation, regulated in response to catabolite repression. Functionally, O-methyltransferase required for two non-consecutive steps during ubiquinone biosynthesis. Catalyzes the 2 O-methylation of 3,4-dihydroxy-5-(all-trans-hexaprenyl)benzoic acid into 4-hydroxy-3-methoxy-5-(all-trans-hexaprenyl)benzoic acid. Also catalyzes the last step of ubiquinone biosynthesis by mediating methylation of 3-demethylubiquinone into ubiquinone. Also able to mediate the methylation of 3-demethylubiquinol-6 into ubiquinol-6. The chain is Ubiquinone biosynthesis O-methyltransferase, mitochondrial from Saccharomyces cerevisiae (strain ATCC 204508 / S288c) (Baker's yeast).